The sequence spans 552 residues: MSSPRLQQQFIRLWQHFQGQTTDTTLQELTGVLNCSRRHIRSLLNAMQLEGWLIWQAEAGRGKRSQLSFVYTGLALQQQRAEDLLEQDRIEQLVQLVGDKEAVRQMLLSHLGRSFRQGKHILRILYYRPLRNLLPSSALRRSEMHIARQIFSGLTNINEENGELKPDLAHHWQMLAPLHWRFYLRPAIRFHHGRELTMDDITTSLSRLIPLPLFSHIEAVNSPMPFVIDIRLSSPDKWLPWLLASVHAMILPQEWQTLPNFAQHPIGTGPYAVVRNNSSQLKIRAFDDYFGYRALIDEVNIWVLPDEPEEMPVSVQFQSDDSHHEQLESRMEEGGYFLLFDKRSPLNQRPEALRWLRQVFNPVSLLSHANTSNQRDWSPAYSLLPRWHHHHPDTPQSIPDGLTDVTLTFYQEHPEYRILSEIMRTLLAQQGVTLHLQTISYEDWYQGNAESDIWFGSLNCYLPLEFSLFAMLYELPLVQHCLNDDLDTDAQQWRSHTLPMAEWCEKLIKSGQLHPLLHHWLQLQGQRSMRGVRMNMLGWFDFKSAWFAPPER.

Residues 163–493 (ELKPDLAHHW…DDLDTDAQQW (331 aa)) are solute-binding.

Activates the small RNA gene sgrS under glucose-phosphate stress conditions as well as yfdZ. Represses its own transcription under both stress and non-stress conditions. Might act as a sensor of the intracellular accumulation of phosphoglucose by binding these molecules in its C-terminal solute-binding domain. This Pectobacterium atrosepticum (strain SCRI 1043 / ATCC BAA-672) (Erwinia carotovora subsp. atroseptica) protein is HTH-type transcriptional regulator SgrR.